A 548-amino-acid polypeptide reads, in one-letter code: Glucose-6-phosphate isomerase (548 aa).

E355 (proton donor) is an active-site residue. Active-site residues include H386 and K514.

The protein belongs to the GPI family.

It is found in the cytoplasm. The enzyme catalyses alpha-D-glucose 6-phosphate = beta-D-fructose 6-phosphate. It functions in the pathway carbohydrate biosynthesis; gluconeogenesis. Its pathway is carbohydrate degradation; glycolysis; D-glyceraldehyde 3-phosphate and glycerone phosphate from D-glucose: step 2/4. Its function is as follows. Catalyzes the reversible isomerization of glucose-6-phosphate to fructose-6-phosphate. The sequence is that of Glucose-6-phosphate isomerase from Proteus mirabilis (strain HI4320).